A 318-amino-acid chain; its full sequence is NADH-ubiquinone oxidoreductase chain 1 (318 aa).

The next 8 helical transmembrane spans lie at 2-22, 68-88, 100-120, 147-167, 171-191, 217-237, 254-273, and 294-314; these read FMLN…FLTL, ITMF…MWIP, LGVL…LWSG, AIIL…TLII, YIWL…STLA, GGPF…MNAL, LYTT…FLWI, and LPLT…MAGI.

This sequence belongs to the complex I subunit 1 family.

The protein resides in the mitochondrion inner membrane. It carries out the reaction a ubiquinone + NADH + 5 H(+)(in) = a ubiquinol + NAD(+) + 4 H(+)(out). Core subunit of the mitochondrial membrane respiratory chain NADH dehydrogenase (Complex I) that is believed to belong to the minimal assembly required for catalysis. Complex I functions in the transfer of electrons from NADH to the respiratory chain. The immediate electron acceptor for the enzyme is believed to be ubiquinone. This is NADH-ubiquinone oxidoreductase chain 1 (MT-ND1) from Hsunycteris thomasi (Thomas's nectar bat).